The chain runs to 500 residues: Pyridine nucleotide-disulfide oxidoreductase domain-containing protein 1 (500 aa).

M1 is subject to N-acetylmethionine.

This sequence belongs to the class-I pyridine nucleotide-disulfide oxidoreductase family. PYROXD1 subfamily. The cofactor is FAD.

The protein localises to the nucleus. Its subcellular location is the cytoplasm. The protein resides in the myofibril. It is found in the sarcomere. In terms of biological role, probable FAD-dependent oxidoreductase; involved in the cellular oxidative stress response. Required for normal sarcomere structure and muscle fiber integrity. The sequence is that of Pyridine nucleotide-disulfide oxidoreductase domain-containing protein 1 (PYROXD1) from Pongo abelii (Sumatran orangutan).